The sequence spans 289 residues: WUSCHEL-related homeobox 1 (289 aa).

Residues 1–11 (MDHMQQQQRQQ) are compositionally biased toward low complexity. A disordered region spans residues 1–34 (MDHMQQQQRQQVGGGGGEEVAGRGGVPVCRPSGT). The span at 12–25 (VGGGGGEEVAGRGG) shows a compositional bias: gly residues. The homeobox; WUS-type DNA-binding region spans 31–96 (PSGTRWTPTT…NHKARERQKK (66 aa)).

The protein belongs to the WUS homeobox family. In terms of assembly, interacts with TPR1, TPR2 and TPR3. In terms of tissue distribution, expressed in young leaf primordia. Expressed in branch an floral meristems. Transiently expressed in the shoot apex.

Its subcellular location is the nucleus. Transcription repressor required for the formation and development of tiller buds and panicles. Required for tiller formation and female sterility. Required for the early developmental stages of axillary meristem formation. Plays a role in maintaining the axillary premeristem zone and in promoting the formation of the axillary meristem by promoting OSH1 expression. Does not seem to be involved in maintenance of the shoot apical meristem (SAM). The sequence is that of WUSCHEL-related homeobox 1 from Oryza sativa subsp. japonica (Rice).